The primary structure comprises 440 residues: Chromosome partition protein MukF (440 aa).

Positions 208-236 (LSETSGTLRELQDTLEAAGDKLQANLLRI) are leucine-zipper.

The protein belongs to the MukF family. In terms of assembly, interacts, and probably forms a ternary complex, with MukE and MukB via its C-terminal region. The complex formation is stimulated by calcium or magnesium. It is required for an interaction between MukE and MukB.

The protein resides in the cytoplasm. It is found in the nucleoid. Involved in chromosome condensation, segregation and cell cycle progression. May participate in facilitating chromosome segregation by condensation DNA from both sides of a centrally located replisome during cell division. Not required for mini-F plasmid partitioning. Probably acts via its interaction with MukB and MukE. Overexpression results in anucleate cells. It has a calcium binding activity. This Escherichia coli O157:H7 protein is Chromosome partition protein MukF.